The sequence spans 303 residues: MSDIDQWIETLKNGENLKETDVKILCNKAKDILNNEDNVIRVEAPVTICGDIHGQFQDLMELFKVGGDVPETNYLFLGDFVDRGYNSVETFLLLLALKVRYPDQITLIRGNHESRQITQVYGFYDECLRKYSTLNVWKYCTEVFDYLALAAVVNDSIFCVHGGLSPYIKTIDEIRIINRKQEVPHEGVMCDLMWSDPDEIEGWSQSARGAGFVFGADVVKEFNRRNGISLICRAHQLAMEGFKLMFDNSLVTVWSAPNYCYRCGNVASILELDENLKKYYKLFEAAPTDRASNSKKTIADYFL.

The Mn(2+) site is built by aspartate 51, histidine 53, aspartate 79, and asparagine 111. Histidine 112 (proton donor) is an active-site residue. Mn(2+) is bound by residues histidine 161 and histidine 235.

Belongs to the PPP phosphatase family. PP-4 (PP-X) subfamily. Mn(2+) is required as a cofactor.

It carries out the reaction O-phospho-L-seryl-[protein] + H2O = L-seryl-[protein] + phosphate. The enzyme catalyses O-phospho-L-threonyl-[protein] + H2O = L-threonyl-[protein] + phosphate. The protein is Serine/threonine-protein phosphatase PP-X homolog 2 (Ppx2) of Paramecium tetraurelia.